We begin with the raw amino-acid sequence, 709 residues long: Meiotic sister-chromatid recombination protein 6, mitochondrial (709 aa).

The transit peptide at 1 to 29 directs the protein to the mitochondrion; that stretch reads MLRINQRLLVRSLRDAQYQYLKSTALRFL.

Its subcellular location is the mitochondrion. In terms of biological role, may be involved in the control of meiotic sister-chromatid recombination. This chain is Meiotic sister-chromatid recombination protein 6, mitochondrial (MSC6), found in Candida glabrata (strain ATCC 2001 / BCRC 20586 / JCM 3761 / NBRC 0622 / NRRL Y-65 / CBS 138) (Yeast).